The sequence spans 382 residues: Carboxynorspermidine/carboxyspermidine decarboxylase (382 aa).

Lys41 is subject to N6-(pyridoxal phosphate)lysine. Substrate is bound by residues Glu236 and Asp272.

The protein belongs to the Orn/Lys/Arg decarboxylase class-II family. NspC subfamily. As to quaternary structure, homodimer. Pyridoxal 5'-phosphate is required as a cofactor.

The protein resides in the cytoplasm. The enzyme catalyses carboxynorspermidine + H(+) = norspermidine + CO2. The catalysed reaction is carboxyspermidine + H(+) = spermidine + CO2. Its function is as follows. Catalyzes the decarboxylation of carboxynorspermidine and carboxyspermidine in vitro. In vivo, responsible for synthesizing spermidine, but not sym-norspermidine. This is Carboxynorspermidine/carboxyspermidine decarboxylase from Campylobacter jejuni subsp. jejuni serotype O:6 (strain 81116 / NCTC 11828).